Reading from the N-terminus, the 226-residue chain is Exopolysaccharide production protein ExoY (226 aa).

A helical transmembrane segment spans residues 34-54 (VLAASVALLLFSPLFLLIMAL).

The protein belongs to the bacterial sugar transferase family.

The protein localises to the cell membrane. Its pathway is glycan metabolism; exopolysaccharide biosynthesis. Needed for the addition of the first sugar (galactose) to the isoprenoid carrier. May function as a sugar transferase. The polypeptide is Exopolysaccharide production protein ExoY (exoY) (Rhizobium meliloti (strain 1021) (Ensifer meliloti)).